We begin with the raw amino-acid sequence, 122 residues long: Large ribosomal subunit protein uL14 (122 aa).

This sequence belongs to the universal ribosomal protein uL14 family. As to quaternary structure, part of the 50S ribosomal subunit. Forms a cluster with proteins L3 and L19. In the 70S ribosome, L14 and L19 interact and together make contacts with the 16S rRNA in bridges B5 and B8.

Binds to 23S rRNA. Forms part of two intersubunit bridges in the 70S ribosome. The chain is Large ribosomal subunit protein uL14 from Shewanella baltica (strain OS223).